Here is a 389-residue protein sequence, read N- to C-terminus: MNFHEYQSKQLLAEYGIPVPAGKVAATPDEAVEVANSLGNGPWMVKAQIHAGGRGKAGGVKFCKTTDDVKAAAAKMLGTKMSTYQTAGVELPINLVLVTTAGEIVKELYLSILVDRGTKTITYIASSEGGVEIEQVAAETPELIHALNVDFVEGVQGYHGRDFGFKLGLNAKQAGQFASIMVNLYKLFNEKDLALVEINPLAILDDGNLYALDGKFDSDDNAAFRQKQLVAMRDKTQEDETEVTASELDINYVTMDGNIGCMVNGAGLAMATMDVIKLNGGEPANFLDVGGGANKQRVIEAFKLILSSDKVEGIFVNIFGGIVRCDMIAEGIIAAVKEVGVKVPVVVRLEGTNVEEGKQLLRDSGMAIIPADNINDGAKKVVEAVKNAA.

One can recognise an ATP-grasp domain in the interval 9–244 (KQLLAEYGIP…KTQEDETEVT (236 aa)). ATP contacts are provided by residues Lys-46, 53 to 55 (GRG), Gly-102, and Glu-107. Mg(2+) contacts are provided by Asn-199 and Asp-213. Substrate is bound by residues Asn-264 and 321–323 (GIV).

Belongs to the succinate/malate CoA ligase beta subunit family. In terms of assembly, heterotetramer of two alpha and two beta subunits. Mg(2+) serves as cofactor.

It carries out the reaction succinate + ATP + CoA = succinyl-CoA + ADP + phosphate. The enzyme catalyses GTP + succinate + CoA = succinyl-CoA + GDP + phosphate. It participates in carbohydrate metabolism; tricarboxylic acid cycle; succinate from succinyl-CoA (ligase route): step 1/1. In terms of biological role, succinyl-CoA synthetase functions in the citric acid cycle (TCA), coupling the hydrolysis of succinyl-CoA to the synthesis of either ATP or GTP and thus represents the only step of substrate-level phosphorylation in the TCA. The beta subunit provides nucleotide specificity of the enzyme and binds the substrate succinate, while the binding sites for coenzyme A and phosphate are found in the alpha subunit. In Xanthomonas axonopodis pv. citri (strain 306), this protein is Succinate--CoA ligase [ADP-forming] subunit beta.